We begin with the raw amino-acid sequence, 262 residues long: Thioredoxin-like protein HCF164, chloroplastic (262 aa).

A chloroplast-targeting transit peptide spans 1–54 (MAVVASRCTGLLLPDLGASLAGFRRRRSTPASSLSFRPRRARRRLGSLSCIAPP). The interval 47 to 90 (SLSCIAPPDSAEPQTDEPAAKDDSTEDKAEASSASQDAGNPTFP) is disordered. Residues 64-76 (PAAKDDSTEDKAE) show a composition bias toward basic and acidic residues. Over residues 78-89 (SSASQDAGNPTF) the composition is skewed to polar residues. Positions 78–230 (SSASQDAGNP…FLDNVVALAS (153 aa)) constitute a Thioredoxin domain. Active-site nucleophile residues include Cys151 and Cys154. Cys151 and Cys154 are oxidised to a cystine.

The protein belongs to the thioredoxin family.

The protein resides in the plastid. It is found in the chloroplast. Functionally, probable thiol-disulfide oxidoreductase that may participate in various redox reactions in the chloroplast. The chain is Thioredoxin-like protein HCF164, chloroplastic from Oryza sativa subsp. japonica (Rice).